A 65-amino-acid polypeptide reads, in one-letter code: Small ribosomal subunit protein eS27 (65 aa).

Zn(2+) is bound by residues Cys-21, Cys-24, Cys-40, and Cys-43. Residues 21–43 form a C4-type zinc finger; it reads CRDCGNVQVVFARPSSTVTCNIC.

It belongs to the eukaryotic ribosomal protein eS27 family. Part of the 30S ribosomal subunit. Zn(2+) serves as cofactor.

This is Small ribosomal subunit protein eS27 from Thermoplasma acidophilum (strain ATCC 25905 / DSM 1728 / JCM 9062 / NBRC 15155 / AMRC-C165).